Consider the following 173-residue polypeptide: MGRYRGPRLRIIRRLGDLPLFTKKKPHIASKRLPLGHPVRKIKRRPSIYGLRLLAKQRCCYSYGLRDYQLKNYIKKARNAQGDPIKNLIFLLESRLDSKIYRSGIVSTMAAARQLITHGHVLVDNIKITIPSYSCNESQILDYKNTKLTSELIEKIKLSFNPIYVLEYYAIKL.

An S4 RNA-binding domain is found at 94–155 (SRLDSKIYRS…TKLTSELIEK (62 aa)).

It belongs to the universal ribosomal protein uS4 family. As to quaternary structure, part of the 30S ribosomal subunit. Contacts protein S5. The interaction surface between S4 and S5 is involved in control of translational fidelity.

Its subcellular location is the plastid. Functionally, one of the primary rRNA binding proteins, it binds directly to 16S rRNA where it nucleates assembly of the body of the 30S subunit. In terms of biological role, with S5 and S12 plays an important role in translational accuracy. The chain is Small ribosomal subunit protein uS4c (rps4) from Helicosporidium sp. subsp. Simulium jonesii (Green alga).